Here is a 381-residue protein sequence, read N- to C-terminus: Spindlin interactor and repressor of chromatin-binding protein (381 aa).

A Glycyl lysine isopeptide (Lys-Gly) (interchain with G-Cter in SUMO2) cross-link involves residue lysine 49. Phosphoserine occurs at positions 122 and 149. A compositionally biased stretch (polar residues) spans 148 to 158 (PSLPSLESGQD). Positions 148–170 (PSLPSLESGQDGQPDPISNPDPV) are disordered. Glycyl lysine isopeptide (Lys-Gly) (interchain with G-Cter in SUMO2) cross-links involve residues lysine 190 and lysine 221. 3 disordered regions span residues 203–270 (PVTP…TDGS), 285–320 (LRTT…LRGT), and 335–381 (AVSL…GSGV). Positions 219–229 (RWKESPENEPA) are enriched in basic and acidic residues. 2 positions are modified to phosphoserine: serine 249 and serine 252. Residues 288-299 (TDCKDSSKDSRA) show a composition bias toward basic and acidic residues. Residues lysine 291 and lysine 295 each participate in a glycyl lysine isopeptide (Lys-Gly) (interchain with G-Cter in SUMO2) cross-link. Low complexity predominate over residues 304–315 (PQPQNPSSASPP). Residues serine 310 and serine 313 each carry the phosphoserine modification.

As to quaternary structure, interacts with SPIN1, SPIN2A, SPIN2B, SPIN3 and SPIN4. Interacts with TCF7L2 in a SPIN1-dependent manner. Interacts with PARP1; promoting PARP1 ADP-ribosyltransferase activity.

It is found in the nucleus. It localises to the chromosome. Its function is as follows. Chromatin protein that stabilizes SPIN1 and enhances its association with histone H3 trimethylated at both 'Lys-4' and 'Lys-9' (H3K4me3K9me3). Positively regulates poly-ADP-ribosylation in response to DNA damage; acts by facilitating PARP1 ADP-ribosyltransferase activity. The polypeptide is Spindlin interactor and repressor of chromatin-binding protein (Mus musculus (Mouse)).